Consider the following 173-residue polypeptide: Chorion protein S19 (173 aa).

Positions 1 to 21 (MNKFATLAVIFCACIVGSCYA) are cleaved as a signal peptide.

It belongs to the chorion protein S19 family.

The protein resides in the secreted. Its function is as follows. Chorion membrane (egg shell) protein; plays a role in protecting the egg from the environment. The polypeptide is Chorion protein S19 (Cp19) (Drosophila melanogaster (Fruit fly)).